The sequence spans 376 residues: Transmembrane protein 183A (376 aa).

2 disordered regions span residues 1 to 20 (MARG…AMPK) and 100 to 127 (MDAQ…ELDG). The chain crosses the membrane as a helical span at residues 300–320 (LNFIFIPIVMGMIFTLFTINV).

This sequence belongs to the TMEM183 family.

The protein localises to the membrane. The polypeptide is Transmembrane protein 183A (TMEM183A) (Homo sapiens (Human)).